The following is a 223-amino-acid chain: Killer cell lectin-like receptor subfamily B member 1B allele B (223 aa).

Residues 1–43 lie on the Cytoplasmic side of the membrane; that stretch reads MDSTTLVYADLNLARIQEPKHDSPPSLSPDTCRCPRWHRLALK. The ITIM motif signature appears at 6 to 11; sequence LVYADL. An LCK-binding motif motif is present at residues 32–35; that stretch reads CRCP. A helical; Signal-anchor for type II membrane protein transmembrane segment spans residues 44–64; the sequence is FGCAGLILLVLVVIGLCVLVL. The Extracellular portion of the chain corresponds to 65–223; that stretch reads SVQKSSVQKI…LNHETPCNDS (159 aa). The region spanning 101–211 is the C-type lectin domain; that stretch reads HRDKCFHVSQ…CSSDNRWICQ (111 aa). 2 cysteine pairs are disulfide-bonded: cysteine 122/cysteine 210 and cysteine 189/cysteine 202.

In terms of assembly, homodimer; disulfide-linked. Interacts with tyrosine kinase LCK. Binds PTPN6/SHP-1 in a phosphorylation-dependent manner. In terms of tissue distribution, expressed in NK cells and a subset of T-cells.

The protein localises to the membrane. Its function is as follows. Receptor for CLEC2D/OCIL. Ligand-binding contributes to inhibition of cytotoxic natural killer (NK) cells. May mediate MHC class I-independent 'missing-self' recognition of allografts, tumor cells and virus-infected cells. This chain is Killer cell lectin-like receptor subfamily B member 1B allele B (Klrb1b), found in Mus musculus (Mouse).